The primary structure comprises 168 residues: UPF0178 protein RBAM_023530 (168 aa).

This sequence belongs to the UPF0178 family.

This chain is UPF0178 protein RBAM_023530, found in Bacillus velezensis (strain DSM 23117 / BGSC 10A6 / LMG 26770 / FZB42) (Bacillus amyloliquefaciens subsp. plantarum).